The chain runs to 34 residues: U4-theraphotoxin-Hs1a (34 aa).

3 cysteine pairs are disulfide-bonded: C3-C17, C10-C22, and C16-C33.

The protein belongs to the neurotoxin 14 (magi-1) family. 05 (ICK-7) subfamily. As to expression, expressed by the venom gland.

The protein resides in the secreted. Intracisternal injection paralyzes mice. The chain is U4-theraphotoxin-Hs1a from Cyriopagopus schmidti (Chinese bird spider).